The primary structure comprises 75 residues: Cytochrome c oxidase subunit 6C (75 aa).

At 1–13 (MAPEVLPKPQMRG) the chain is on the mitochondrial matrix side. The helical transmembrane segment at 14–54 (LLARRLRFHMVTGFVLSLGVAALYKVGVADKRKKAYADFYR) threads the bilayer. The Mitochondrial intermembrane portion of the chain corresponds to 55 to 75 (NYDAMKDFEEMRKAGIFQSVK).

Belongs to the cytochrome c oxidase subunit 6c family. In terms of assembly, component of the cytochrome c oxidase (complex IV, CIV), a multisubunit enzyme composed of 14 subunits. The complex is composed of a catalytic core of 3 subunits MT-CO1, MT-CO2 and MT-CO3, encoded in the mitochondrial DNA, and 11 supernumerary subunits COX4I, COX5A, COX5B, COX6A, COX6B, COX6C, COX7A, COX7B, COX7C, COX8 and NDUFA4, which are encoded in the nuclear genome. The complex exists as a monomer or a dimer and forms supercomplexes (SCs) in the inner mitochondrial membrane with NADH-ubiquinone oxidoreductase (complex I, CI) and ubiquinol-cytochrome c oxidoreductase (cytochrome b-c1 complex, complex III, CIII), resulting in different assemblies (supercomplex SCI(1)III(2)IV(1) and megacomplex MCI(2)III(2)IV(2)).

The protein localises to the mitochondrion inner membrane. It participates in energy metabolism; oxidative phosphorylation. Its function is as follows. Component of the cytochrome c oxidase, the last enzyme in the mitochondrial electron transport chain which drives oxidative phosphorylation. The respiratory chain contains 3 multisubunit complexes succinate dehydrogenase (complex II, CII), ubiquinol-cytochrome c oxidoreductase (cytochrome b-c1 complex, complex III, CIII) and cytochrome c oxidase (complex IV, CIV), that cooperate to transfer electrons derived from NADH and succinate to molecular oxygen, creating an electrochemical gradient over the inner membrane that drives transmembrane transport and the ATP synthase. Cytochrome c oxidase is the component of the respiratory chain that catalyzes the reduction of oxygen to water. Electrons originating from reduced cytochrome c in the intermembrane space (IMS) are transferred via the dinuclear copper A center (CU(A)) of subunit 2 and heme A of subunit 1 to the active site in subunit 1, a binuclear center (BNC) formed by heme A3 and copper B (CU(B)). The BNC reduces molecular oxygen to 2 water molecules using 4 electrons from cytochrome c in the IMS and 4 protons from the mitochondrial matrix. In Macaca silenus (Lion-tailed macaque), this protein is Cytochrome c oxidase subunit 6C (COX6C).